The primary structure comprises 870 residues: Adhesin AWP1 (870 aa).

Residues 1-18 (MSLITIFAFFIKATLVLS) form the signal peptide. Asn224 carries an N-linked (GlcNAc...) asparagine glycan. The cysteines at positions 284 and 322 are disulfide-linked. The disordered stretch occupies residues 329 to 835 (ITPSSSVEPS…TRQTSVIAPG (507 aa)). Low complexity predominate over residues 331–566 (PSSSVEPSSS…SSSAVVPTSS (236 aa)). Gly residues predominate over residues 567-576 (AGGGNGGDNG). The span at 577–641 (QPGADGQPGA…PGAAGQPGAA (65 aa)) shows a compositional bias: low complexity. Over residues 642 to 652 (GQPGAGSGGGS) the composition is skewed to gly residues. Residue Asn669 is glycosylated (N-linked (GlcNAc...) asparagine). The segment covering 675-721 (SGTGNGQAGSGQAGSGQVGSGQAGAGQAGSGQAGAGQAGSGQAGAGQ) has biased composition (gly residues). Polar residues-rich tracts occupy residues 724–735 (LDNTASGQSEGG) and 792–801 (GSGTDQSSGR).

The protein resides in the secreted. It localises to the cell wall. Functionally, may play a role in cell adhesion. The protein is Adhesin AWP1 of Candida glabrata (strain ATCC 2001 / BCRC 20586 / JCM 3761 / NBRC 0622 / NRRL Y-65 / CBS 138) (Yeast).